Reading from the N-terminus, the 1604-residue chain is MWVSWAPGLWLLGLWATFGHGANTGAQCPPSQQEGLKLEHSSSLPANVTGFNLIHRLSLMKTSAIKKIRNPKGPLILRLGAAPVTQPTRRVFPRGLPEEFALVLTLLLKKHTHQKTWYLFQVTDANGYPQISLEVNSQERSLELRAQGQDGDFVSCIFPVPQLFDLRWHKLMLSVAGRVASVHVDCSSASSQPLGPRRPMRPVGHVFLGLDAEQGKPVSFDLQQVHIYCDPELVLEEGCCEILPAGCPPETSKARRDTQSNELIEINPQSEGKVYTRCFCLEEPQNSEVDAQLTGRISQKAERGAKVHQETAADECPPCVHGARDSNVTLAPSGPKGGKGERGLPGPPGSKGEKGARGNDCVRISPDAPLQCAEGPKGEKGESGALGPSGLPGSTGEKGQKGEKGDGGIKGVPGKPGRDGRPGEICVIGPKGQKGDPGFVGPEGLAGEPGPPGLPGPPGIGLPGTPGDPGGPPGPKGDKGSSGIPGKEGPGGKPGKPGVKGEKGDPCEVCPTLPEGFQNFVGLPGKPGPKGEPGDPVPARGDPGIQGIKGEKGEPCLSCSSVVGAQHLVSSTGASGDVGSPGFGLPGLPGRAGVPGLKGEKGNFGEAGPAGSPGPPGPVGPAGIKGAKGEPCEPCPALSNLQDGDVRVVALPGPSGEKGEPGPPGFGLPGKQGKAGERGLKGQKGDAGNPGDPGTPGTTGRPGLSGEPGVQGPAGPKGEKGDGCTACPSLQGTVTDMAGRPGQPGPKGEQGPEGVGRPGKPGQPGLPGVQGPPGLKGVQGEPGPPGRGVQGPQGEPGAPGLPGIQGLPGPRGPPGPTGEKGAQGSPGVKGATGPVGPPGASVSGPPGRDGQQGQTGLRGTPGEKGPRGEKGEPGECSCPSQGDLIFSGMPGAPGLWMGSSWQPGPQGPPGIPGPPGPPGVPGLQGVPGNNGLPGQPGLTAELGSLPIEQHLLKSICGDCVQGQRAHPGYLVEKGEKGDQGIPGVPGLDNCAQCFLSLERPRAEEARGDNSEGDPGCVGSPGLPGPPGLPGQRGEEGPPGMRGSPGPPGPIGPPGFPGAVGSPGLPGLQGERGLTGLTGDKGEPGPPGQPGYPGATGPPGLPGIKGERGYTGSAGEKGEPGPPGSEGLPGPPGPAGPRGERGPQGNSGEKGDQGFQGQPGFPGPPGPPGFPGKVGSPGPPGPQAEKGSEGIRGPSGLPGSPGPPGPPGIQGPAGLDGLDGKDGKPGLRGDPGPAGPPGLMGPPGFKGKTGHPGLPGPKGDCGKPGPPGSTGRPGAEGEPGAMGPQGRPGPPGHVGPPGPPGQPGPAGISAVGLKGDRGATGERGLAGLPGQPGPPGHPGPPGEPGTDGAAGKEGPPGKQGFYGPPGPKGDPGAAGQKGQAGEKGRAGMPGGPGKSGSMGPVGPPGPAGERGHPGAPGPSGSPGLPGVPGSMGDMVNYDEIKRFIRQEIIKMFDERMAYYTSRMQFPMEMAAAPGRPGPPGKDGAPGRPGAPGSPGLPGQIGREGRQGLPGVRGLPGTKGEKGDIGIGIAGENGLPGPPGPQGPPGYGKMGATGPMGQQGIPGIPGPPGPMGQPGKAGHCNPSDCFGAMPMEQQYPPMKTMKGPFG.

The first 21 residues, 1 to 21, serve as a signal peptide directing secretion; it reads MWVSWAPGLWLLGLWATFGHG. N-linked (GlcNAc...) asparagine glycosylation is present at N47. Residues 50 to 231 enclose the Laminin G-like domain; sequence GFNLIHRLSL…LQQVHIYCDP (182 aa). The segment at 232–374 is nonhelical region 10 (NC10); sequence ELVLEEGCCE…SPDAPLQCAE (143 aa). Residues 301-311 are compositionally biased toward basic and acidic residues; sequence AERGAKVHQET. The segment at 301–509 is disordered; the sequence is AERGAKVHQE…KGEKGDPCEV (209 aa). The N-linked (GlcNAc...) asparagine glycan is linked to N327. The 49-residue stretch at 375 to 423 folds into the Collagen-like 1 domain; sequence GPKGEKGESGALGPSGLPGSTGEKGQKGEKGDGGIKGVPGKPGRDGRPG. The tract at residues 375–506 is triple-helical region 9 (COL9) with 3 imperfections; that stretch reads GPKGEKGESG…PGVKGEKGDP (132 aa). Residues 383–397 are compositionally biased toward low complexity; it reads SGALGPSGLPGSTGE. Positions 398–407 are enriched in basic and acidic residues; that stretch reads KGQKGEKGDG. A compositionally biased stretch (pro residues) spans 449–460; that stretch reads PGPPGLPGPPGI. Over residues 486–495 the composition is skewed to gly residues; the sequence is GKEGPGGKPG. The segment at 507-521 is nonhelical region 9 (NC9); sequence CEVCPTLPEGFQNFV. Positions 522 to 555 are triple-helical region 8 (COL8) with 1 imperfection; sequence GLPGKPGPKGEPGDPVPARGDPGIQGIKGEKGEP. Positions 540–542 match the Cell attachment site motif; it reads RGD. The nonhelical region 8 (NC8) stretch occupies residues 556–572; the sequence is CLSCSSVVGAQHLVSST. The triple-helical region 7 (COL7) with 1 imperfection stretch occupies residues 573–631; it reads GASGDVGSPGFGLPGLPGRAGVPGLKGEKGNFGEAGPAGSPGPPGPVGPAGIKGAKGEP. 2 Collagen-like domains span residues 573 to 633 and 667 to 721; these read GASG…EPCE and GLPG…GEKG. Positions 604–917 are disordered; that stretch reads FGEAGPAGSP…PPGIPGPPGP (314 aa). Residues 632–652 are nonhelical region 7 (NC7); the sequence is CEPCPALSNLQDGDVRVVALP. Residues 653–723 are triple-helical region 6 (COL6) with 1 imperfection; the sequence is GPSGEKGEPG…AGPKGEKGDG (71 aa). Residues 674–684 are compositionally biased toward basic and acidic residues; the sequence is KAGERGLKGQK. Residues 686 to 702 show a composition bias toward low complexity; it reads DAGNPGDPGTPGTTGRP. The tract at residues 724–738 is nonhelical region 6 (NC6); the sequence is CTACPSLQGTVTDMA. The segment at 739-876 is triple-helical region 5 (COL5) with 3 imperfections; it reads GRPGQPGPKG…RGEKGEPGEC (138 aa). 3 stretches are compositionally biased toward low complexity: residues 766–781, 792–808, and 826–846; these read LPGV…VQGE, PQGE…QGLP, and PGVK…SGPP. In terms of domain architecture, Collagen-like 4 spans 788–840; that stretch reads GVQGPQGEPGAPGLPGIQGLPGPRGPPGPTGEKGAQGSPGVKGATGPVGPPGA. Residues 864–873 are compositionally biased toward basic and acidic residues; that stretch reads KGPRGEKGEP. The nonhelical region 5 (NC5) stretch occupies residues 877-887; sequence SCPSQGDLIFS. Residues 888 to 938 form the Collagen-like 5 domain; it reads GMPGAPGLWMGSSWQPGPQGPPGIPGPPGPPGVPGLQGVPGNNGLPGQPGL. Positions 888–939 are triple-helical region 4 (COL4) with 2 imperfections; that stretch reads GMPGAPGLWMGSSWQPGPQGPPGIPGPPGPPGVPGLQGVPGNNGLPGQPGLT. A compositionally biased stretch (pro residues) spans 905–917; that stretch reads PQGPPGIPGPPGP. The tract at residues 940-973 is nonhelical region 4 (NC4); the sequence is AELGSLPIEQHLLKSICGDCVQGQRAHPGYLVEK. The interval 974–988 is triple-helical region 3 (COL3); it reads GEKGDQGIPGVPGLD. The interval 989–1011 is nonhelical region 3 (NC3); the sequence is NCAQCFLSLERPRAEEARGDNSE. 2 disordered regions span residues 1001–1429 and 1468–1517; these read RAEE…VPGS and MAAA…PGTK. Positions 1006-1008 match the Cell attachment site motif; sequence RGD. The triple-helical region 2 (COL2) with 2 imperfections stretch occupies residues 1012–1433; sequence GDPGCVGSPG…PGVPGSMGDM (422 aa). Residues 1018 to 1075 enclose the Collagen-like 6 domain; the sequence is GSPGLPGPPGLPGQRGEEGPPGMRGSPGPPGPIGPPGFPGAVGSPGLPGLQGERGLTG. Composition is skewed to pro residues over residues 1044-1055, 1160-1169, and 1199-1208; these read PGPPGPIGPPGF, FPGPPGPPGF, and SPGPPGPPGI. The span at 1217–1226 shows a compositional bias: basic and acidic residues; it reads LDGKDGKPGL. The Cell attachment site signature appears at 1227-1229; that stretch reads RGD. The segment covering 1271–1284 has biased composition (low complexity); that stretch reads RPGAEGEPGAMGPQ. 2 stretches are compositionally biased toward pro residues: residues 1286 to 1302 and 1330 to 1342; these read RPGP…PGQP and QPGP…PPGE. The span at 1369–1378 shows a compositional bias: low complexity; it reads DPGAAGQKGQ. Positions 1386-1395 are enriched in gly residues; it reads GMPGGPGKSG. A compositionally biased stretch (low complexity) spans 1420–1429; sequence SPGLPGVPGS. A nonhelical region 2 (NC2) region spans residues 1434-1472; the sequence is VNYDEIKRFIRQEIIKMFDERMAYYTSRMQFPMEMAAAP. Collagen-like domains lie at 1472-1524 and 1528-1576; these read PGRP…GDIG and AGEN…GKAG. Residues 1473–1578 are triple-helical region 1 (COL1) with 2 imperfections; sequence GRPGPPGKDG…MGQPGKAGHC (106 aa). Residues 1579-1604 are nonhelical region 1 (NC1); that stretch reads NPSDCFGAMPMEQQYPPMKTMKGPFG.

Belongs to the fibril-associated collagens with interrupted helices (FACIT) family. In terms of assembly, homotrimer. Interacts with FBN1, fibronectin and integrins ITGA1/ITGB1 and ITGA2/ITGB1. Integrin ITGA1/ITGB1 binds to a unique site within COL16A1 located close to its C-terminal end between collagenous domains COL1-COL3. Post-translationally, prolines at the third position of the tripeptide repeating unit (G-X-Y) are hydroxylated in some or all of the chains. Glycosylated. In papillary dermis, is a component of specialized fibrillin-1-containing microfibrils, whereas in territorial cartilage matrix, it is localized to a discrete population of thin, weakly banded collagen fibrils in association with other collagens (at protein level). In the placenta, where it is found in the amnion, a membranous tissue lining the amniotic cavity. Within the amnion, it is found in an acellular, relatively dense layer of a complex network of reticular fibers. Also located to a fibroblast layer beneath this dense layer. Exists in tissues in association with other types of collagen.

It localises to the secreted. The protein localises to the extracellular space. It is found in the extracellular matrix. Its function is as follows. Involved in mediating cell attachment and inducing integrin-mediated cellular reactions, such as cell spreading and alterations in cell morphology. This chain is Collagen alpha-1(XVI) chain (COL16A1), found in Homo sapiens (Human).